The sequence spans 717 residues: Scinderin (717 aa).

Positions 1 to 363 are actin-severing; the sequence is MAPERHPPAF…DGFGKVYVTE (363 aa). The Gelsolin-like 1 repeat unit spans residues 28 to 108; the sequence is ELVPVPPSRH…IQGYESNEFV (81 aa). A 1,2-diacyl-sn-glycero-3-phospho-(1D-myo-inositol-4,5-bisphosphate) contacts are provided by residues 112–119 and 138–146; these read KGGIKYKA and RLLHIKGRR. 5 Gelsolin-like repeats span residues 148 to 220, 265 to 340, 408 to 483, 526 to 590, and 628 to 703; these read VRAT…PDEL, VVAE…TPIF, RVPV…PHLL, AEVD…EEFW, and IEEV…PPTF. Residues 364–715 are ca(2+)-dependent actin binding; that stretch reads RVAKIEQIEF…WFLAWDSNKW (352 aa). Ca(2+)-binding residues include asparagine 538, aspartate 539, glutamate 562, aspartate 643, aspartate 644, and glutamate 666.

It belongs to the villin/gelsolin family.

The protein resides in the cytoplasm. It localises to the cytoskeleton. Its subcellular location is the cell projection. The protein localises to the podosome. Functionally, ca(2+)-dependent actin filament-severing protein that has a regulatory function in exocytosis by affecting the organization of the microfilament network underneath the plasma membrane. In vitro, also has barbed end capping and nucleating activities in the presence of Ca(2+). Severing activity is inhibited by phosphatidylinositol 4,5-bis-phosphate (PIP2). Required for megakaryocyte differentiation, maturation, polyploidization and apoptosis with the release of platelet-like particles. Plays a role in osteoclastogenesis (OCG) and actin cytoskeletal organization in osteoclasts. Regulates chondrocyte proliferation and differentiation. Inhibits cell proliferation and tumorigenesis. Signaling is mediated by MAPK, p38 and JNK pathways. This is Scinderin (SCIN) from Gallus gallus (Chicken).